The sequence spans 408 residues: LL-diaminopimelate aminotransferase (408 aa).

Substrate is bound by residues Y15 and G42. Pyridoxal 5'-phosphate contacts are provided by residues Y72, 108 to 109 (SK), Y132, N187, Y218, and 246 to 248 (SFS). Positions 109, 132, and 187 each coordinate substrate. The residue at position 249 (K249) is an N6-(pyridoxal phosphate)lysine. R257 and N292 together coordinate pyridoxal 5'-phosphate. N292 and R388 together coordinate substrate.

Belongs to the class-I pyridoxal-phosphate-dependent aminotransferase family. LL-diaminopimelate aminotransferase subfamily. Homodimer. Pyridoxal 5'-phosphate is required as a cofactor.

The enzyme catalyses (2S,6S)-2,6-diaminopimelate + 2-oxoglutarate = (S)-2,3,4,5-tetrahydrodipicolinate + L-glutamate + H2O + H(+). It functions in the pathway amino-acid biosynthesis; L-lysine biosynthesis via DAP pathway; LL-2,6-diaminopimelate from (S)-tetrahydrodipicolinate (aminotransferase route): step 1/1. In terms of biological role, involved in the synthesis of meso-diaminopimelate (m-DAP or DL-DAP), required for both lysine and peptidoglycan biosynthesis. Catalyzes the direct conversion of tetrahydrodipicolinate to LL-diaminopimelate. This Parasynechococcus marenigrum (strain WH8102) protein is LL-diaminopimelate aminotransferase.